The chain runs to 231 residues: Aquaporin Z (231 aa).

2 consecutive transmembrane segments (helical) span residues 9–29 (LLGT…AAAF) and 34–54 (IGFV…IYAV). The NPA 1 signature appears at 63–65 (NPA). Transmembrane regions (helical) follow at residues 82 to 102 (IPYI…LYVI), 133 to 153 (SAIV…IGAT), and 160 to 180 (GFAP…SIPI). The NPA 2 signature appears at 186-188 (NPA). The helical transmembrane segment at 202 to 222 (LEQLWFFWVMPIIGGIVGGGI) threads the bilayer.

Belongs to the MIP/aquaporin (TC 1.A.8) family. In terms of assembly, homotetramer.

It localises to the cell inner membrane. It catalyses the reaction H2O(in) = H2O(out). Its function is as follows. Channel that permits osmotically driven movement of water in both directions. It is involved in the osmoregulation and in the maintenance of cell turgor during volume expansion in rapidly growing cells. It mediates rapid entry or exit of water in response to abrupt changes in osmolarity. The polypeptide is Aquaporin Z (Photorhabdus laumondii subsp. laumondii (strain DSM 15139 / CIP 105565 / TT01) (Photorhabdus luminescens subsp. laumondii)).